The following is a 114-amino-acid chain: UPF0342 protein SSP0954 (114 aa).

The protein belongs to the UPF0342 family.

This chain is UPF0342 protein SSP0954, found in Staphylococcus saprophyticus subsp. saprophyticus (strain ATCC 15305 / DSM 20229 / NCIMB 8711 / NCTC 7292 / S-41).